A 203-amino-acid chain; its full sequence is Glycerol-3-phosphate acyltransferase (203 aa).

A run of 5 helical transmembrane segments spans residues 10–30 (LLALVGLAAYLLGAIPFGLLI), 59–79 (PAAAATLILDAGKGAFAVILA), 87–107 (AAQIAGAAAFLGHCFPVYLKF), 116–136 (FFGTVIALSWPLGLAAGAIWL), and 168–188 (LVVLSLFLGFLIWIRHRENII).

It belongs to the PlsY family. As to quaternary structure, probably interacts with PlsX.

It localises to the cell inner membrane. It carries out the reaction an acyl phosphate + sn-glycerol 3-phosphate = a 1-acyl-sn-glycero-3-phosphate + phosphate. Its pathway is lipid metabolism; phospholipid metabolism. Catalyzes the transfer of an acyl group from acyl-phosphate (acyl-PO(4)) to glycerol-3-phosphate (G3P) to form lysophosphatidic acid (LPA). This enzyme utilizes acyl-phosphate as fatty acyl donor, but not acyl-CoA or acyl-ACP. This Dinoroseobacter shibae (strain DSM 16493 / NCIMB 14021 / DFL 12) protein is Glycerol-3-phosphate acyltransferase.